The sequence spans 222 residues: Orotate phosphoribosyltransferase (222 aa).

Lys-29 provides a ligand contact to 5-phospho-alpha-D-ribose 1-diphosphate. Residue 37–38 (FF) participates in orotate binding. Residues 75–76 (YK), Arg-101, Lys-102, Lys-105, His-107, and 126–134 (DDVISAGTS) each bind 5-phospho-alpha-D-ribose 1-diphosphate. 2 residues coordinate orotate: Ser-130 and Arg-158.

This sequence belongs to the purine/pyrimidine phosphoribosyltransferase family. PyrE subfamily. As to quaternary structure, homodimer. The cofactor is Mg(2+).

The enzyme catalyses orotidine 5'-phosphate + diphosphate = orotate + 5-phospho-alpha-D-ribose 1-diphosphate. The protein operates within pyrimidine metabolism; UMP biosynthesis via de novo pathway; UMP from orotate: step 1/2. Functionally, catalyzes the transfer of a ribosyl phosphate group from 5-phosphoribose 1-diphosphate to orotate, leading to the formation of orotidine monophosphate (OMP). The polypeptide is Orotate phosphoribosyltransferase (Polynucleobacter asymbioticus (strain DSM 18221 / CIP 109841 / QLW-P1DMWA-1) (Polynucleobacter necessarius subsp. asymbioticus)).